A 191-amino-acid polypeptide reads, in one-letter code: Ferric nitrobindin-like protein (191 aa).

Positions 20-26 (GNWAGAG) match the GXWXGXG motif.

It belongs to the nitrobindin family.

The chain is Ferric nitrobindin-like protein from Streptomyces avermitilis (strain ATCC 31267 / DSM 46492 / JCM 5070 / NBRC 14893 / NCIMB 12804 / NRRL 8165 / MA-4680).